The sequence spans 136 residues: Putative zinc finger protein 818 (136 aa).

The C2H2-type 1; degenerate zinc finger occupies 64-83 (NVCGKVLSQNSHLVNHQRIH). A C2H2-type 2 zinc finger spans residues 89-111 (YRCHECGKAFTQGSRFINHQIVH).

This sequence belongs to the krueppel C2H2-type zinc-finger protein family.

The protein localises to the nucleus. In terms of biological role, may be involved in transcriptional regulation. The protein is Putative zinc finger protein 818 (ZNF818P) of Homo sapiens (Human).